The primary structure comprises 657 residues: Pyoverdine export ATP-binding/permease protein PvdT (657 aa).

The region spanning 6 to 245 (IDLQDIRKSY…ASTNPGALQA (240 aa)) is the ABC transporter domain. 43–50 (GASGSGKS) serves as a coordination point for ATP. A run of 4 helical transmembrane segments spans residues 285 to 305 (ALTLLGIIIGVASVVVMLAVG), 539 to 559 (IAAISLLVGGIGVMNIMLMTV), 590 to 610 (LSVVGGIAGIGLALLVGGVLI), and 620 to 640 (LVAIAGAFACALITGVVFGFM).

It belongs to the ABC transporter superfamily. Macrolide exporter (TC 3.A.1.122) family. As to quaternary structure, part of the tripartite efflux system PvdRT-OpmQ, which is composed of an inner membrane component with both ATPase and permease domains, PvdT, a periplasmic membrane fusion protein, PvdR, and an outer membrane component, OpmQ.

Its subcellular location is the cell inner membrane. In terms of biological role, part of the tripartite efflux system PvdRT-OpmQ required for the secretion into the extracellular milieu of the siderophore pyoverdine (PVD), which is involved in iron acquisition. This subunit binds PVD and drives its secretion by hydrolyzing ATP. The system is responsible for export of newly synthesized PVD after the final steps of biosynthesis have taken place in the periplasm. It is also responsible for recycling of PVD after internalization of ferri-PVD into the periplasm by the outer-membrane receptor FpvA and release of iron from PVD, thus making PVD available for new cycles of iron uptake. This Pseudomonas fluorescens (strain Pf0-1) protein is Pyoverdine export ATP-binding/permease protein PvdT.